Consider the following 141-residue polypeptide: Molybdopterin synthase catalytic subunit 2 (141 aa).

Residues 37–39, 103–104, K119, and 126–128 each bind substrate; these read MIR, HR, and KHQ.

This sequence belongs to the MoaE family. Heterotetramer of 2 MoaD subunits and 2 MoaE subunits. Also stable as homodimer. The enzyme changes between these two forms during catalysis.

The enzyme catalyses 2 [molybdopterin-synthase sulfur-carrier protein]-C-terminal-Gly-aminoethanethioate + cyclic pyranopterin phosphate + H2O = molybdopterin + 2 [molybdopterin-synthase sulfur-carrier protein]-C-terminal Gly-Gly + 2 H(+). It participates in cofactor biosynthesis; molybdopterin biosynthesis. Functionally, converts molybdopterin precursor Z into molybdopterin. This requires the incorporation of two sulfur atoms into precursor Z to generate a dithiolene group. The sulfur is provided by MoaD. The polypeptide is Molybdopterin synthase catalytic subunit 2 (moaE2) (Mycobacterium tuberculosis (strain CDC 1551 / Oshkosh)).